The chain runs to 213 residues: Pyridoxine/pyridoxamine 5'-phosphate oxidase (213 aa).

FMN-binding positions include 60–65, 75–76, K82, and Q104; these read RMVLMK and YS. K65 provides a ligand contact to substrate. Y122 and R126 together coordinate substrate. FMN is bound by residues 139-140 and W184; that span reads QS. Residue 190–192 coordinates substrate; it reads RLH. R194 is an FMN binding site.

Belongs to the pyridoxamine 5'-phosphate oxidase family. As to quaternary structure, homodimer. It depends on FMN as a cofactor.

It carries out the reaction pyridoxamine 5'-phosphate + O2 + H2O = pyridoxal 5'-phosphate + H2O2 + NH4(+). The catalysed reaction is pyridoxine 5'-phosphate + O2 = pyridoxal 5'-phosphate + H2O2. The protein operates within cofactor metabolism; pyridoxal 5'-phosphate salvage; pyridoxal 5'-phosphate from pyridoxamine 5'-phosphate: step 1/1. It functions in the pathway cofactor metabolism; pyridoxal 5'-phosphate salvage; pyridoxal 5'-phosphate from pyridoxine 5'-phosphate: step 1/1. Functionally, catalyzes the oxidation of either pyridoxine 5'-phosphate (PNP) or pyridoxamine 5'-phosphate (PMP) into pyridoxal 5'-phosphate (PLP). The chain is Pyridoxine/pyridoxamine 5'-phosphate oxidase from Nitrobacter winogradskyi (strain ATCC 25391 / DSM 10237 / CIP 104748 / NCIMB 11846 / Nb-255).